A 250-amino-acid chain; its full sequence is Phosphoribosylaminoimidazole-succinocarboxamide synthase (250 aa).

The protein belongs to the SAICAR synthetase family.

The enzyme catalyses 5-amino-1-(5-phospho-D-ribosyl)imidazole-4-carboxylate + L-aspartate + ATP = (2S)-2-[5-amino-1-(5-phospho-beta-D-ribosyl)imidazole-4-carboxamido]succinate + ADP + phosphate + 2 H(+). The protein operates within purine metabolism; IMP biosynthesis via de novo pathway; 5-amino-1-(5-phospho-D-ribosyl)imidazole-4-carboxamide from 5-amino-1-(5-phospho-D-ribosyl)imidazole-4-carboxylate: step 1/2. The protein is Phosphoribosylaminoimidazole-succinocarboxamide synthase of Synechococcus sp. (strain CC9605).